We begin with the raw amino-acid sequence, 123 residues long: Large ribosomal subunit protein uL29 (123 aa).

Residues 84 to 123 (RPKKTRAMRRRLNKHEEGLKTKKQQRKERLYPPRKYAVKA) are disordered. A compositionally biased stretch (basic residues) spans 86–96 (KKTRAMRRRLN).

The protein belongs to the universal ribosomal protein uL29 family. As to quaternary structure, component of the large ribosomal subunit.

Its subcellular location is the cytoplasm. Its function is as follows. Component of the large ribosomal subunit. The ribosome is a large ribonucleoprotein complex responsible for the synthesis of proteins in the cell. The polypeptide is Large ribosomal subunit protein uL29 (RPL35) (Ophiophagus hannah (King cobra)).